A 143-amino-acid polypeptide reads, in one-letter code: Large-conductance mechanosensitive channel (143 aa).

2 helical membrane-spanning segments follow: residues 19-39 and 81-101; these read VGVI…ADVI and GSFL…FLVV.

Belongs to the MscL family. As to quaternary structure, homopentamer.

Its subcellular location is the cell inner membrane. Functionally, channel that opens in response to stretch forces in the membrane lipid bilayer. May participate in the regulation of osmotic pressure changes within the cell. The sequence is that of Large-conductance mechanosensitive channel from Rhodopseudomonas palustris (strain HaA2).